We begin with the raw amino-acid sequence, 316 residues long: tRNA dimethylallyltransferase (316 aa).

Residue 17–24 (GPTASGKT) coordinates ATP. 19-24 (TASGKT) is a binding site for substrate. Interaction with substrate tRNA stretches follow at residues 42 to 45 (DSAL), 166 to 170 (QRLSR), and 247 to 252 (RCVGYR).

This sequence belongs to the IPP transferase family. Monomer. Mg(2+) is required as a cofactor.

It catalyses the reaction adenosine(37) in tRNA + dimethylallyl diphosphate = N(6)-dimethylallyladenosine(37) in tRNA + diphosphate. Functionally, catalyzes the transfer of a dimethylallyl group onto the adenine at position 37 in tRNAs that read codons beginning with uridine, leading to the formation of N6-(dimethylallyl)adenosine (i(6)A). This is tRNA dimethylallyltransferase from Salmonella schwarzengrund (strain CVM19633).